The following is an 89-amino-acid chain: Large ribosomal subunit protein bL27 (89 aa).

The segment at 1–21 (MAHKKAGGSSRNGRDSQSKRL) is disordered.

This sequence belongs to the bacterial ribosomal protein bL27 family.

In Rhizobium leguminosarum bv. trifolii (strain WSM2304), this protein is Large ribosomal subunit protein bL27.